Consider the following 2729-residue polypeptide: Protein NO VEIN (2729 aa).

Residues 1–27 (MQGNHDGSWSLHPSTNNGSGRANGNIN) form a disordered region. 2 short sequence motifs (nuclear localization signal) span residues 194-201 (KRKVDVLR) and 473-480 (MKRLGGSN). Disordered regions lie at residues 477–517 (GGSN…IPKL) and 2482–2515 (LPSSSKTRHGSSKTNTDDSKQELDTSSSKEDVTE). Basic and acidic residues-rich tracts occupy residues 488–497 (RNHEKSDSSK) and 2496–2515 (NTDDSKQELDTSSSKEDVTE).

In terms of tissue distribution, specifically expressed in developing embryos, leaf primordia, and shoot and root apical meristems.

Its subcellular location is the nucleus. In terms of biological role, essential protein required for cell fate determination during embryogenesis. Mediates auxin-dependent coordinated cell-fate specification and patterning in embryos (e.g. cotyledon outgrowth and separation), shoots and roots (e.g. leaf vascular development, cellular patterning and stem cell maintenance in the meristems). Required for provascular PIN1 expression and region-specific expression of PIN7 in leaf primordia, cell type-specific expression of PIN3, PIN4, and PIN7 in the root, and PIN2 polarity in the root cortex. This is Protein NO VEIN from Arabidopsis thaliana (Mouse-ear cress).